Reading from the N-terminus, the 310-residue chain is Small ribosomal subunit protein uS2 (310 aa).

Residues 249 to 272 (WERDLLEGEKAEKKDDAEAAEKPA) are compositionally biased toward basic and acidic residues. Residues 249–310 (WERDLLEGEK…EAPAADAEQA (62 aa)) are disordered. Over residues 273–310 (EAPAAEAPAAEAAEAPAAEAAPAEEPAAEAPAADAEQA) the composition is skewed to low complexity.

It belongs to the universal ribosomal protein uS2 family.

The protein is Small ribosomal subunit protein uS2 (rpsB) of Streptomyces coelicolor (strain ATCC BAA-471 / A3(2) / M145).